Here is a 320-residue protein sequence, read N- to C-terminus: Cilia- and flagella-associated protein 77 (320 aa).

A disordered region spans residues 1 to 27 (MPEARSSGPDLTRWRKQQQPVRRTVSQ). Polar residues predominate over residues 17 to 27 (QQQPVRRTVSQ).

It belongs to the CFAP77 family. Microtubule inner protein component of sperm flagellar doublet microtubules. Expressed in airway epithelial cells.

It localises to the cytoplasm. The protein resides in the cytoskeleton. The protein localises to the cilium axoneme. Its subcellular location is the flagellum axoneme. In terms of biological role, microtubule inner protein (MIP) part of the dynein-decorated doublet microtubules (DMTs) in cilia axoneme, which is required for motile cilia beating. The polypeptide is Cilia- and flagella-associated protein 77 (Homo sapiens (Human)).